We begin with the raw amino-acid sequence, 86 residues long: U15-lycotoxin-Ls1d (86 aa).

Positions 1 to 20 are cleaved as a signal peptide; the sequence is MNSKIFAVLLLLAFLSCVLS. The 46-residue stretch at 21–66 folds into the WAP domain; it reads DQYCPKSSITACKKMNIRNDCCKDDDCTGGSWCCATPCGNFCKYPT. 5 disulfide bridges follow: Cys-24–Cys-54, Cys-32–Cys-58, Cys-41–Cys-53, Cys-42–Cys-80, and Cys-47–Cys-62.

The protein belongs to the venom protein 11 family. 01 (wap-1) subfamily. Contains 5 disulfide bonds. In terms of tissue distribution, expressed by the venom gland.

The protein localises to the secreted. Functionally, has antibacterial activity. In Lycosa singoriensis (Wolf spider), this protein is U15-lycotoxin-Ls1d.